Reading from the N-terminus, the 597-residue chain is MMENNRNYFVAIALSVLILIAWQFFYVSPKMEKDRIAAEKAQQAQSQPGTQQAAPGQAAPGQALPGGAIPSAAESRDQAIGKSARVAIDTPALSGSINLTGARFDDLKLKGYRETVDPKSPVITLFSPAETADGYFTEIGYIGSDATGSVPGPQTVWMLSGGDKLTPSTPVTLSYTNDKGITFTRTISVDDRYMFEVVDSIKNDAAAAVSLSSYGRVTRFNKPSTPSIYVLHEGFVGVAGEHGLQEVGYSDVEDEEPVEPGKSTGGWLGITDKYWAATIVPPQDTPFDIRFSHFADGRPRYQSDYKSDAVTVAPGQSAEVKNLIFAGAKEVPVVDNYELTYSIPNFDKLIDWGWFYFITKPMFKMMDFFFRLFGNFGIAILITTIVVKLIFFPLANKQYASMANMKKVQPKMEELKKKFGDDRMGLQQAMMQLYKEEKINPLAGCWPILIQIPVFFALYKVIYVTIEMRHAPFFGWIQDLSAPDPTTIINLFGLLPFEGPAFLHLGIWPIVMGVTMFLQMRMNPTPPDPTQAMLFTWMPVVFTFMLASFPAGLVIYWAWNNTLSILQQGIIMKRQGVKVELFDNLKSLFSKKPKPAE.

The helical transmembrane segment at 8-28 (YFVAIALSVLILIAWQFFYVS) threads the bilayer. The segment at 38 to 75 (AEKAQQAQSQPGTQQAAPGQAAPGQALPGGAIPSAAES) is disordered. Low complexity predominate over residues 41–70 (AQQAQSQPGTQQAAPGQAAPGQALPGGAIP). 4 consecutive transmembrane segments (helical) span residues 372 to 392 (LFGN…LIFF), 446 to 466 (WPIL…YVTI), 491 to 511 (LFGL…WPIV), and 535 to 555 (FTWM…GLVI).

This sequence belongs to the OXA1/ALB3/YidC family. Type 1 subfamily. In terms of assembly, interacts with the Sec translocase complex via SecD. Specifically interacts with transmembrane segments of nascent integral membrane proteins during membrane integration.

The protein resides in the cell inner membrane. Required for the insertion and/or proper folding and/or complex formation of integral membrane proteins into the membrane. Involved in integration of membrane proteins that insert both dependently and independently of the Sec translocase complex, as well as at least some lipoproteins. Aids folding of multispanning membrane proteins. The chain is Membrane protein insertase YidC from Sinorhizobium medicae (strain WSM419) (Ensifer medicae).